A 202-amino-acid polypeptide reads, in one-letter code: Xanthine phosphoribosyltransferase (202 aa).

2 residues coordinate xanthine: Leu20 and Asn27. Residue 128–132 (ANGEA) participates in 5-phospho-alpha-D-ribose 1-diphosphate binding. Lys156 lines the xanthine pocket.

This sequence belongs to the purine/pyrimidine phosphoribosyltransferase family. Xpt subfamily. Homodimer.

It is found in the cytoplasm. The catalysed reaction is XMP + diphosphate = xanthine + 5-phospho-alpha-D-ribose 1-diphosphate. Its pathway is purine metabolism; XMP biosynthesis via salvage pathway; XMP from xanthine: step 1/1. Functionally, converts the preformed base xanthine, a product of nucleic acid breakdown, to xanthosine 5'-monophosphate (XMP), so it can be reused for RNA or DNA synthesis. The polypeptide is Xanthine phosphoribosyltransferase (Alkaliphilus metalliredigens (strain QYMF)).